The sequence spans 194 residues: Probable DNA-directed RNA polymerase subunit delta (194 aa).

The HTH HARE-type domain occupies 14–83 (LSMIEVARAI…GENKWGLRSW (70 aa)). The interval 117-194 (GDEDAIDYSD…SDDEEDEEGE (78 aa)) is disordered.

Belongs to the RpoE family. As to quaternary structure, RNAP is composed of a core of 2 alpha, a beta and a beta' subunits. The core is associated with a delta subunit and one of several sigma factors.

Its function is as follows. Participates in both the initiation and recycling phases of transcription. In the presence of the delta subunit, RNAP displays an increased specificity of transcription, a decreased affinity for nucleic acids, and an increased efficiency of RNA synthesis because of enhanced recycling. The polypeptide is Probable DNA-directed RNA polymerase subunit delta (Streptococcus mutans serotype c (strain ATCC 700610 / UA159)).